The following is a 112-amino-acid chain: Large ribosomal subunit protein uL22 (112 aa).

It belongs to the universal ribosomal protein uL22 family. As to quaternary structure, part of the 50S ribosomal subunit.

This protein binds specifically to 23S rRNA; its binding is stimulated by other ribosomal proteins, e.g. L4, L17, and L20. It is important during the early stages of 50S assembly. It makes multiple contacts with different domains of the 23S rRNA in the assembled 50S subunit and ribosome. In terms of biological role, the globular domain of the protein is located near the polypeptide exit tunnel on the outside of the subunit, while an extended beta-hairpin is found that lines the wall of the exit tunnel in the center of the 70S ribosome. In Akkermansia muciniphila (strain ATCC BAA-835 / DSM 22959 / JCM 33894 / BCRC 81048 / CCUG 64013 / CIP 107961 / Muc), this protein is Large ribosomal subunit protein uL22.